A 230-amino-acid chain; its full sequence is Ribonuclease HII (230 aa).

The RNase H type-2 domain maps to M1–Q224. A divalent metal cation contacts are provided by D7, E8, and D112.

This sequence belongs to the RNase HII family. Mn(2+) serves as cofactor. Requires Mg(2+) as cofactor.

It is found in the cytoplasm. It catalyses the reaction Endonucleolytic cleavage to 5'-phosphomonoester.. Its function is as follows. Endonuclease that specifically degrades the RNA of RNA-DNA hybrids. The protein is Ribonuclease HII (rnhB) of Methanocaldococcus jannaschii (strain ATCC 43067 / DSM 2661 / JAL-1 / JCM 10045 / NBRC 100440) (Methanococcus jannaschii).